A 168-amino-acid polypeptide reads, in one-letter code: Putative flavin-containing monooxygenase FMO GS-OX-like 11 (168 aa).

17–22 lines the FAD pocket; the sequence is GAGAAG.

It belongs to the FMO family. The cofactor is FAD.

In terms of biological role, catalyzes the conversion of methylthioalkyl glucosinolates of any chain length into methylsulfinylalkyl glucosinolates. The chain is Putative flavin-containing monooxygenase FMO GS-OX-like 11 from Arabidopsis thaliana (Mouse-ear cress).